The sequence spans 151 residues: SsrA-binding protein (151 aa).

This sequence belongs to the SmpB family.

It is found in the cytoplasm. Required for rescue of stalled ribosomes mediated by trans-translation. Binds to transfer-messenger RNA (tmRNA), required for stable association of tmRNA with ribosomes. tmRNA and SmpB together mimic tRNA shape, replacing the anticodon stem-loop with SmpB. tmRNA is encoded by the ssrA gene; the 2 termini fold to resemble tRNA(Ala) and it encodes a 'tag peptide', a short internal open reading frame. During trans-translation Ala-aminoacylated tmRNA acts like a tRNA, entering the A-site of stalled ribosomes, displacing the stalled mRNA. The ribosome then switches to translate the ORF on the tmRNA; the nascent peptide is terminated with the 'tag peptide' encoded by the tmRNA and targeted for degradation. The ribosome is freed to recommence translation, which seems to be the essential function of trans-translation. The polypeptide is SsrA-binding protein (Campylobacter concisus (strain 13826)).